Reading from the N-terminus, the 73-residue chain is uncharacterized protein (73 aa).

This is an uncharacterized protein from Enterobacteria phage RB18 (Bacteriophage RB18).